The sequence spans 92 residues: Probable Fe(2+)-trafficking protein (92 aa).

The protein belongs to the Fe(2+)-trafficking protein family.

Could be a mediator in iron transactions between iron acquisition and iron-requiring processes, such as synthesis and/or repair of Fe-S clusters in biosynthetic enzymes. This Shewanella piezotolerans (strain WP3 / JCM 13877) protein is Probable Fe(2+)-trafficking protein.